A 432-amino-acid chain; its full sequence is Trigger factor (432 aa).

Residues 161–246 (EDRVTIDFTG…LKKVEERELP (86 aa)) form the PPIase FKBP-type domain.

It belongs to the FKBP-type PPIase family. Tig subfamily.

It is found in the cytoplasm. The enzyme catalyses [protein]-peptidylproline (omega=180) = [protein]-peptidylproline (omega=0). Its function is as follows. Involved in protein export. Acts as a chaperone by maintaining the newly synthesized protein in an open conformation. Functions as a peptidyl-prolyl cis-trans isomerase. The chain is Trigger factor from Salmonella typhi.